Reading from the N-terminus, the 974-residue chain is Membrane-associated phosphatidylinositol transfer protein 3 (974 aa).

Phosphoserine is present on residues Ser-30, Ser-31, Ser-109, Ser-295, Ser-298, Ser-321, Ser-343, and Ser-495. The tract at residues 284 to 304 (GDSPASSSRKGSISSTQDTPV) is disordered. A compositionally biased stretch (polar residues) spans 292–302 (RKGSISSTQDT). Disordered regions lie at residues 323–346 (IDISSGLEDEEPKRPLPRKQSDSS) and 491–536 (SSRD…SMAP). In terms of domain architecture, DDHD spans 390 to 594 (FDFDVSDFFL…VAFILRQVMR (205 aa)). The segment covering 520-533 (EGSSHSESSESSDS) has biased composition (low complexity). Ser-612, Ser-907, Ser-928, and Ser-946 each carry phosphoserine. A disordered region spans residues 927–974 (MSVQQPDPPAANPKPERAQSQPESDKDHERPLPALSWARGPPKFESVP).

It belongs to the PtdIns transfer protein family. PI transfer class IIA subfamily. Interacts with PTK2B via its C-terminus. Detected in brain and spleen, and at low levels in ovary.

The protein localises to the endomembrane system. Its function is as follows. Catalyzes the transfer of phosphatidylinositol and phosphatidylcholine between membranes (in vitro). Binds calcium ions. This Homo sapiens (Human) protein is Membrane-associated phosphatidylinositol transfer protein 3 (PITPNM3).